Here is a 1293-residue protein sequence, read N- to C-terminus: Putative DNA-directed RNA polymerase 008R (1293 aa).

C61, C64, C71, H74, C99, C102, and C123 together coordinate Zn(2+). Residues 270–339 (TNRKPMAGIK…PVMVTPFNVS (70 aa)) mediate DNA binding. The span at 354–376 (EMRDGTVHRPSEWRPSHGDHMET) shows a compositional bias: basic and acidic residues. The disordered stretch occupies residues 354–390 (EMRDGTVHRPSEWRPSHGDHMETADGSPLGRVTRPSY). Mg(2+) contacts are provided by D474, D476, and D478. The interval 724-734 (GQQYVGGSRPG) is alpha-amanitin binding. The segment at 776–788 (PREVFFHAKSGRE) is bridging helix.

Belongs to the RNA polymerase beta' chain family.

The enzyme catalyses RNA(n) + a ribonucleoside 5'-triphosphate = RNA(n+1) + diphosphate. In terms of biological role, component of the DNA-dependent RNA polymerase that catalyzes the transcription of DNA into RNA using the four ribonucleoside triphosphates as substrates. Largest and catalytic component of RNA polymerase II which synthesizes mRNA precursors and many functional non-coding RNAs. Forms the polymerase active center together with the second largest subunit. This Frog virus 3 (isolate Goorha) (FV-3) protein is Putative DNA-directed RNA polymerase 008R.